The sequence spans 246 residues: DNA repair protein RecO (246 aa).

It belongs to the RecO family.

Involved in DNA repair and RecF pathway recombination. This chain is DNA repair protein RecO, found in Methylobacterium nodulans (strain LMG 21967 / CNCM I-2342 / ORS 2060).